A 232-amino-acid polypeptide reads, in one-letter code: Aspartate racemase (232 aa).

Asp49–Thr51 is a binding site for substrate. The active-site Proton donor/acceptor is the Cys84. Substrate-binding positions include Asn85 to Ala87 and Lys166. Cys195 serves as the catalytic Proton donor/acceptor.

This sequence belongs to the aspartate/glutamate racemases family.

It carries out the reaction L-aspartate = D-aspartate. This Thermococcus sp. (strain KS-8) protein is Aspartate racemase.